Consider the following 261-residue polypeptide: Transcription antitermination protein NusB (261 aa).

The tract at residues 168–261 is disordered; that stretch reads ARVEDQPSDD…DLHKKDTTDD (94 aa). The span at 217 to 228 shows a compositional bias: polar residues; sequence VDTTSGNASDPE. Residues 242-261 show a composition bias toward basic and acidic residues; it reads PTSKDHELATDLHKKDTTDD.

Belongs to the NusB family.

Its function is as follows. Involved in transcription antitermination. Required for transcription of ribosomal RNA (rRNA) genes. Binds specifically to the boxA antiterminator sequence of the ribosomal RNA (rrn) operons. The sequence is that of Transcription antitermination protein NusB from Cutibacterium acnes (strain DSM 16379 / KPA171202) (Propionibacterium acnes).